Consider the following 640-residue polypeptide: uncharacterized protein (640 aa).

A run of 14 helical transmembrane segments spans residues 8–28, 52–72, 90–110, 136–156, 179–199, 208–228, 241–261, 277–297, 298–318, 352–372, 391–411, 446–466, 497–517, and 619–639; these read GGVV…LGMF, LGGF…CYLI, LFVA…FLLA, LWYA…LVVL, VFML…LHAW, PSPV…YGIV, WWGL…VLQA, ENMG…DTGA, YGPA…HAAF, TVFF…AGFV, IVAL…GLSV, AIAA…APMV, IAPG…AVLA, and GSVH…LVVA.

This sequence belongs to the complex I subunit 4 family.

The protein resides in the cell membrane. This is an uncharacterized protein from Mycobacterium tuberculosis (strain CDC 1551 / Oshkosh).